The chain runs to 440 residues: Protein disulfide-isomerase A6 (440 aa).

The signal sequence occupies residues 1-19 (MALLVLGLVSCTFFLAVNG). 2 consecutive Thioredoxin domains span residues 20–133 (LYSS…ALRQ) and 154–287 (SDSS…EDIA). Active-site nucleophile residues include Cys-55 and Cys-58. A disulfide bond links Cys-55 and Cys-58. The residue at position 129 (Ser-129) is a Phosphoserine. Residues 141-161 (GRSGGYSSGKQGRSDSSSKKD) form a disordered region. Positions 152 to 161 (GRSDSSSKKD) are enriched in basic and acidic residues. At Ser-156 the chain carries Phosphoserine; by FAM20C. Ser-158 is modified (phosphoserine). Residues Cys-190 and Cys-193 each act as nucleophile in the active site. Cys-190 and Cys-193 are joined by a disulfide. Phosphoserine is present on Ser-428. Residues 437–440 (KDEL) carry the Prevents secretion from ER motif.

This sequence belongs to the protein disulfide isomerase family. Part of a large chaperone multiprotein complex comprising DNAJB11, HSP90B1, HSPA5, HYOU, PDIA2, PDIA4, PDIA6, PPIB, SDF2L1, UGGT1 and very small amounts of ERP29, but not, or at very low levels, CALR nor CANX. Interacts with MICA on the surface of tumor cells, leading to MICA disulfide bond reduction which is required for its release from tumor cells. Interacts with ITGB3 following platelet stimulation. Interacts with ERN1; the interaction is direct. Interacts with EIF2AK3. In terms of tissue distribution, expressed in platelets (at protein level).

The protein localises to the endoplasmic reticulum lumen. It is found in the cell membrane. The protein resides in the melanosome. It carries out the reaction Catalyzes the rearrangement of -S-S- bonds in proteins.. May function as a chaperone that inhibits aggregation of misfolded proteins. Negatively regulates the unfolded protein response (UPR) through binding to UPR sensors such as ERN1, which in turn inactivates ERN1 signaling. May also regulate the UPR via the EIF2AK3 UPR sensor. Plays a role in platelet aggregation and activation by agonists such as convulxin, collagen and thrombin. This is Protein disulfide-isomerase A6 (PDIA6) from Homo sapiens (Human).